The sequence spans 455 residues: Ribulose bisphosphate carboxylase large chain (455 aa).

At K5 the chain carries N6,N6,N6-trimethyllysine. Substrate contacts are provided by N114 and T164. K166 serves as the catalytic Proton acceptor. A substrate-binding site is contributed by K168. The Mg(2+) site is built by K192, D194, and E195. N6-carboxylysine is present on K192. The Proton acceptor role is filled by H285. Substrate-binding residues include R286, H318, and S370.

It belongs to the RuBisCO large chain family. Type I subfamily. As to quaternary structure, heterohexadecamer of 8 large chains and 8 small chains; disulfide-linked. The disulfide link is formed within the large subunit homodimers. The cofactor is Mg(2+). Post-translationally, the disulfide bond which can form in the large chain dimeric partners within the hexadecamer appears to be associated with oxidative stress and protein turnover.

Its subcellular location is the plastid. The protein localises to the chloroplast. It catalyses the reaction 2 (2R)-3-phosphoglycerate + 2 H(+) = D-ribulose 1,5-bisphosphate + CO2 + H2O. It carries out the reaction D-ribulose 1,5-bisphosphate + O2 = 2-phosphoglycolate + (2R)-3-phosphoglycerate + 2 H(+). Functionally, ruBisCO catalyzes two reactions: the carboxylation of D-ribulose 1,5-bisphosphate, the primary event in carbon dioxide fixation, as well as the oxidative fragmentation of the pentose substrate in the photorespiration process. Both reactions occur simultaneously and in competition at the same active site. The protein is Ribulose bisphosphate carboxylase large chain of Lupinus paraguariensis (Lupine).